A 270-amino-acid chain; its full sequence is L-fucose dehydrogenase (270 aa).

NAD(+) is bound by residues R19, I21, D40, K41, D62, V63, N89, Y154, K158, I187, T189, and L191. Y154 acts as the Proton acceptor in catalysis.

It belongs to the short-chain dehydrogenases/reductases (SDR) family. As to quaternary structure, homotetramer. In terms of tissue distribution, detected in retina.

It is found in the cytoplasm. It catalyses the reaction L-fucose + NAD(+) = L-fucono-1,5-lactone + NADH + H(+). The catalysed reaction is D-arabinose + NAD(+) = D-arabinono-1,5-lactone + NADH + H(+). It carries out the reaction L-galactose + NAD(+) = L-galactono-1,5-lactone + NADH + H(+). It functions in the pathway carbohydrate degradation; L-fucose degradation. In terms of biological role, catalyzes the NAD(+)-dependent oxidation of L-fucose, yielding L-fucono-1,5-lactone, which rapidly converts spontaneously to L-fucone-1,4-lactone. Can also act on D-arabinose and L-galactose, with lower catalytic efficiency. Does not use NADPH. May be the initial enzyme of the putative L-fucose degradation pathway in mammals. The sequence is that of L-fucose dehydrogenase (HSD17B14) from Bos taurus (Bovine).